Reading from the N-terminus, the 157-residue chain is Cyclic pyranopterin monophosphate synthase (157 aa).

Residues 74-76 (MCH) and 112-113 (ME) each bind substrate. Residue D127 is part of the active site.

The protein belongs to the MoaC family. Homohexamer; trimer of dimers.

It carries out the reaction (8S)-3',8-cyclo-7,8-dihydroguanosine 5'-triphosphate = cyclic pyranopterin phosphate + diphosphate. Its pathway is cofactor biosynthesis; molybdopterin biosynthesis. In terms of biological role, catalyzes the conversion of (8S)-3',8-cyclo-7,8-dihydroguanosine 5'-triphosphate to cyclic pyranopterin monophosphate (cPMP). The polypeptide is Cyclic pyranopterin monophosphate synthase (Campylobacter jejuni subsp. jejuni serotype O:2 (strain ATCC 700819 / NCTC 11168)).